A 138-amino-acid polypeptide reads, in one-letter code: Basic phospholipase A2 BP-I (138 aa).

Residues M1–G16 form the signal peptide. Disulfide bonds link C42–C132, C44–C60, C59–C112, C65–C138, C66–C105, C73–C98, and C91–C103. G45 and G47 together coordinate Ca(2+). Residue H63 is part of the active site. D106 is an active-site residue.

This sequence belongs to the phospholipase A2 family. Group II subfamily. K49 sub-subfamily. Ca(2+) serves as cofactor. As to expression, expressed by the venom gland.

It is found in the secreted. It carries out the reaction a 1,2-diacyl-sn-glycero-3-phosphocholine + H2O = a 1-acyl-sn-glycero-3-phosphocholine + a fatty acid + H(+). Functionally, snake venom phospholipase A2 (PLA2) that has strong myotoxic activity with a low phospholipase A2 activity. PLA2 catalyzes the calcium-dependent hydrolysis of the 2-acyl groups in 3-sn-phosphoglycerides. The chain is Basic phospholipase A2 BP-I from Protobothrops flavoviridis (Habu).